We begin with the raw amino-acid sequence, 333 residues long: Bacteriocin helveticin-J (333 aa).

Functionally, this heat-sensitive bacteriocin inhibits the growth of closely related Lactobacillus species. This chain is Bacteriocin helveticin-J (hlv), found in Lactobacillus helveticus (Lactobacillus suntoryeus).